The chain runs to 1179 residues: Tubulin glycylase 3B (1179 aa).

Positions 177–199 (NKGQTNNSNRENGGNFHSEQSPK) are enriched in polar residues. Disordered regions lie at residues 177-208 (NKGQ…VVSG), 250-278 (QQPQ…LPLS), 592-625 (KVLS…AVQQ), and 853-890 (QKQH…LKQD). Residues 592-601 (KVLSNTKSKD) are compositionally biased toward basic and acidic residues. Composition is skewed to polar residues over residues 614–625 (KSKSNNQNAVQQ) and 881–890 (AQSSTSLKQD). Positions 790–1152 (FIDFYETVDF…SMAKKGTKKN (363 aa)) constitute a TTL domain. ATP-binding positions include 965 to 968 (QKYI), K978, and D980.

The protein localises to the cell projection. The protein resides in the cilium. Its subcellular location is the cytoplasm. It localises to the cytoskeleton. It is found in the cilium axoneme. Functionally, polyglycylase which modifies tubulin, generating side chains of glycine on the gamma-carboxyl groups of specific glutamate residues within the C-terminal tail of tubulin. Polyglycylates tubulin, with a preference for alpha-tubulin toward beta-tubulin. The sequence is that of Tubulin glycylase 3B (TTLL3B) from Tetrahymena thermophila (strain SB210).